Consider the following 413-residue polypeptide: Serine--tRNA ligase (413 aa).

221-223 lines the L-serine pocket; it reads TAE. 252–254 is an ATP binding site; it reads RRE. Glutamate 275 contributes to the L-serine binding site. 339–342 is a binding site for ATP; it reads EVSS. Position 375 (serine 375) interacts with L-serine.

The protein belongs to the class-II aminoacyl-tRNA synthetase family. Type-1 seryl-tRNA synthetase subfamily. As to quaternary structure, homodimer. The tRNA molecule binds across the dimer.

The protein localises to the cytoplasm. The catalysed reaction is tRNA(Ser) + L-serine + ATP = L-seryl-tRNA(Ser) + AMP + diphosphate + H(+). It catalyses the reaction tRNA(Sec) + L-serine + ATP = L-seryl-tRNA(Sec) + AMP + diphosphate + H(+). It participates in aminoacyl-tRNA biosynthesis; selenocysteinyl-tRNA(Sec) biosynthesis; L-seryl-tRNA(Sec) from L-serine and tRNA(Sec): step 1/1. Its function is as follows. Catalyzes the attachment of serine to tRNA(Ser). Is also able to aminoacylate tRNA(Sec) with serine, to form the misacylated tRNA L-seryl-tRNA(Sec), which will be further converted into selenocysteinyl-tRNA(Sec). This chain is Serine--tRNA ligase, found in Dehalococcoides mccartyi (strain ATCC BAA-2266 / KCTC 15142 / 195) (Dehalococcoides ethenogenes (strain 195)).